Consider the following 875-residue polypeptide: Receptor-like protein 33 (875 aa).

The signal sequence occupies residues Met-1–Ala-23. Residues Val-24 to Gln-822 lie on the Extracellular side of the membrane. Residues Asn-65, Asn-103, Asn-133, Asn-146, and Asn-181 are each glycosylated (N-linked (GlcNAc...) asparagine). LRR repeat units lie at residues Phe-110–Asn-133, Leu-134–Asn-157, Phe-159–Leu-182, Ser-183–Ser-205, Leu-206–Leu-230, Thr-231–Leu-254, Ile-256–Ile-278, Ser-280–Ser-302, Pro-303–Leu-327, and Asn-329–His-351. Residues Asn-229 and Asn-250 are each glycosylated (N-linked (GlcNAc...) asparagine). Residue Asn-299 is glycosylated (N-linked (GlcNAc...) asparagine). The stretch at Leu-352 to Cys-377 is one LRR 11; degenerate repeat. Residues Asn-364, Asn-395, and Asn-411 are each glycosylated (N-linked (GlcNAc...) asparagine). LRR repeat units lie at residues Phe-378–Asp-401, Leu-404–Gln-427, Arg-428–Gln-451, Met-455–Pro-477, Pro-479–Leu-502, Arg-503–Ser-528, Leu-530–Ile-549, Lys-550–Phe-573, Thr-575–Ser-596, Leu-597–Phe-619, Pro-620–Glu-643, Leu-686–Leu-710, Lys-711–Leu-734, Arg-735–Leu-758, and Tyr-760–Thr-783. N-linked (GlcNAc...) asparagine glycosylation is found at Asn-490 and Asn-514. A glycan (N-linked (GlcNAc...) asparagine) is linked at Asn-587. N-linked (GlcNAc...) asparagine glycosylation is present at Asn-633. Asn-717, Asn-757, and Asn-765 each carry an N-linked (GlcNAc...) asparagine glycan. The helical transmembrane segment at Val-823 to Ile-843 threads the bilayer. Residues Gly-844–Ser-875 lie on the Cytoplasmic side of the membrane.

Belongs to the RLP family.

Its subcellular location is the cell membrane. The polypeptide is Receptor-like protein 33 (Arabidopsis thaliana (Mouse-ear cress)).